Reading from the N-terminus, the 329-residue chain is IDS-like terpene synthase 1 (329 aa).

Aspartate 79 and aspartate 83 together coordinate Mg(2+).

This sequence belongs to the FPP/GGPP synthase family. Mg(2+) is required as a cofactor.

The enzyme catalyses (2E)-geranyl diphosphate + H2O = linalool + diphosphate. The catalysed reaction is (2E,6E)-farnesyl diphosphate + H2O = (6E)-nerolidol + diphosphate. Its function is as follows. Terpene synthase that shows monoterpene synthase activity and produces linalool, using geranyl diphosphate (GPP) as substrate. Also shows sesquiterpene synthase activity as it is able to convert farnesyl diphosphate (FPP) into (E)-nerolidol. The protein is IDS-like terpene synthase 1 of Melampsora lini (Rust fungus).